Reading from the N-terminus, the 20-residue chain is Cytochrome c oxidase subunit 6A1, mitochondrial (20 aa).

Belongs to the cytochrome c oxidase subunit 6A family. In terms of assembly, component of the cytochrome c oxidase (complex IV, CIV), a multisubunit enzyme composed of 14 subunits. The complex is composed of a catalytic core of 3 subunits MT-CO1, MT-CO2 and MT-CO3, encoded in the mitochondrial DNA, and 11 supernumerary subunits COX4I, COX5A, COX5B, COX6A, COX6B, COX6C, COX7A, COX7B, COX7C, COX8 and NDUFA4, which are encoded in the nuclear genome. The complex exists as a monomer or a dimer and forms supercomplexes (SCs) in the inner mitochondrial membrane with NADH-ubiquinone oxidoreductase (complex I, CI) and ubiquinol-cytochrome c oxidoreductase (cytochrome b-c1 complex, complex III, CIII), resulting in different assemblies (supercomplex SCI(1)III(2)IV(1) and megacomplex MCI(2)III(2)IV(2)). In terms of tissue distribution, liver specific isoform.

It localises to the mitochondrion inner membrane. It participates in energy metabolism; oxidative phosphorylation. In terms of biological role, component of the cytochrome c oxidase, the last enzyme in the mitochondrial electron transport chain which drives oxidative phosphorylation. The respiratory chain contains 3 multisubunit complexes succinate dehydrogenase (complex II, CII), ubiquinol-cytochrome c oxidoreductase (cytochrome b-c1 complex, complex III, CIII) and cytochrome c oxidase (complex IV, CIV), that cooperate to transfer electrons derived from NADH and succinate to molecular oxygen, creating an electrochemical gradient over the inner membrane that drives transmembrane transport and the ATP synthase. Cytochrome c oxidase is the component of the respiratory chain that catalyzes the reduction of oxygen to water. Electrons originating from reduced cytochrome c in the intermembrane space (IMS) are transferred via the dinuclear copper A center (CU(A)) of subunit 2 and heme A of subunit 1 to the active site in subunit 1, a binuclear center (BNC) formed by heme A3 and copper B (CU(B)). The BNC reduces molecular oxygen to 2 water molecules unsing 4 electrons from cytochrome c in the IMS and 4 protons from the mitochondrial matrix. The chain is Cytochrome c oxidase subunit 6A1, mitochondrial (COX6A1) from Ovis aries (Sheep).